Here is a 104-residue protein sequence, read N- to C-terminus: MQKIRKGDKVVVLSGKDKGCSGEVIKVNPKENKAFVRGVNMVKRHQRQTQKQEAGIVSKEAPIHLSNLAIADPKDGKPTRVGFRMNVDGNKVRFAKRSGELING.

It belongs to the universal ribosomal protein uL24 family. Part of the 50S ribosomal subunit.

Functionally, one of two assembly initiator proteins, it binds directly to the 5'-end of the 23S rRNA, where it nucleates assembly of the 50S subunit. One of the proteins that surrounds the polypeptide exit tunnel on the outside of the subunit. The polypeptide is Large ribosomal subunit protein uL24 (Bartonella quintana (strain Toulouse) (Rochalimaea quintana)).